Reading from the N-terminus, the 432-residue chain is Adenylosuccinate synthetase (432 aa).

GTP contacts are provided by residues 12–18 and 40–42; these read GDEGKGK and GHT. Catalysis depends on D13, which acts as the Proton acceptor. Mg(2+) is bound by residues D13 and G40. Residues 13-16, 38-41, T130, R144, Q226, T241, and R305 each bind IMP; these read DEGK and NAGH. The active-site Proton donor is the H41. 301 to 307 contributes to the substrate binding site; that stretch reads STTGRSR. GTP is bound by residues R307, 333–335, and 415–417; these read KLD and SVG.

The protein belongs to the adenylosuccinate synthetase family. In terms of assembly, homodimer. Requires Mg(2+) as cofactor.

It is found in the cytoplasm. It carries out the reaction IMP + L-aspartate + GTP = N(6)-(1,2-dicarboxyethyl)-AMP + GDP + phosphate + 2 H(+). The protein operates within purine metabolism; AMP biosynthesis via de novo pathway; AMP from IMP: step 1/2. Functionally, plays an important role in the de novo pathway of purine nucleotide biosynthesis. Catalyzes the first committed step in the biosynthesis of AMP from IMP. The protein is Adenylosuccinate synthetase of Bdellovibrio bacteriovorus (strain ATCC 15356 / DSM 50701 / NCIMB 9529 / HD100).